The chain runs to 439 residues: Phenylacetate-coenzyme A ligase (439 aa).

Belongs to the phenylacetyl-CoA ligase family. As to quaternary structure, monomer.

It catalyses the reaction 2-phenylacetate + ATP + CoA = phenylacetyl-CoA + AMP + diphosphate. It functions in the pathway aromatic compound metabolism; phenylacetate degradation. With respect to regulation, inhibited by divalent cations (zinc, copper, mercury) and by the sulfhydryl reagents 5,5-dithiobis(2-nitrobenzoic acid), N-ethylmaleimide and p-chloromercuribenzoate. In terms of biological role, catalyzes the activation of phenylacetic acid (PA) to phenylacetyl-CoA (PA-CoA). Involved in the phenylalanine metabolism. Can also use CTP and UTP as substrate. The polypeptide is Phenylacetate-coenzyme A ligase (paaK) (Pseudomonas putida (Arthrobacter siderocapsulatus)).